Here is a 415-residue protein sequence, read N- to C-terminus: Phosphoribosylamine--glycine ligase (415 aa).

The 204-residue stretch at 108–311 folds into the ATP-grasp domain; it reads KKIMEKYNIP…LMQHIIDLDE (204 aa). Position 134 to 191 (134 to 191) interacts with ATP; the sequence is IENCELPVVVKKDGLAAGKGVIIADTIEAARSAIEIMYGDEEEGTVVFETFLEGEEFS. Residues glutamate 281 and asparagine 283 each contribute to the Mg(2+) site.

Belongs to the GARS family. The cofactor is Mg(2+). Mn(2+) is required as a cofactor.

It catalyses the reaction 5-phospho-beta-D-ribosylamine + glycine + ATP = N(1)-(5-phospho-beta-D-ribosyl)glycinamide + ADP + phosphate + H(+). Its pathway is purine metabolism; IMP biosynthesis via de novo pathway; N(1)-(5-phospho-D-ribosyl)glycinamide from 5-phospho-alpha-D-ribose 1-diphosphate: step 2/2. This Staphylococcus aureus (strain MW2) protein is Phosphoribosylamine--glycine ligase.